Here is a 215-residue protein sequence, read N- to C-terminus: Glutathione S-transferase-like protein (215 aa).

The region spanning 1 to 76 is the GST N-terminal domain; sequence MPNARILKIQ…YVAASGPAAP (76 aa). In terms of domain architecture, GST C-terminal spans 82–215; sequence NVAEQAAVRQ…LVAVRKEASV (134 aa).

It belongs to the GST superfamily.

This Aspergillus aculeatus (strain ATCC 16872 / CBS 172.66 / WB 5094) protein is Glutathione S-transferase-like protein.